The chain runs to 352 residues: C-C chemokine receptor type 5 (352 aa).

Residues 1 to 30 are Extracellular-facing; that stretch reads MVYQVSSPTYDIDYYTSEPCQKINVKQIAA. Sulfotyrosine is present on Tyr-3. O-linked (GalNAc...) serine glycans are attached at residues Ser-6 and Ser-7. 3 positions are modified to sulfotyrosine: Tyr-10, Tyr-14, and Tyr-15. 2 disulfides stabilise this stretch: Cys-20/Cys-269 and Cys-101/Cys-178. Residues 31-58 form a helical membrane-spanning segment; the sequence is RLLPPLYSLVFIFGFVGNILVVLILINC. At 59–68 the chain is on the cytoplasmic side; that stretch reads KRLKSMTDIY. The helical transmembrane segment at 69-89 threads the bilayer; sequence LLNLAISDLLFLLTIPFWAHY. Residues 90–102 are Extracellular-facing; that stretch reads AAAQWDFGNTMCQ. A helical membrane pass occupies residues 103-124; the sequence is LLTGLYLIGFFSGIFFIILLTI. The Cytoplasmic segment spans residues 125-141; the sequence is DRYLAIVHAVFALKART. The chain crosses the membrane as a helical span at residues 142-166; the sequence is VTFGLVTSVITWVVAVFASLPGIIF. At 167–198 the chain is on the extracellular side; it reads TRSQREGLHYTCSSHFPSSQYQFWKNFQTLKI. The helical transmembrane segment at 199–218 threads the bilayer; the sequence is VILGLVLPLLVMVICYSGIL. Topologically, residues 219 to 235 are cytoplasmic; sequence KTLLRCRNEKKRHRAVR. The chain crosses the membrane as a helical span at residues 236 to 260; that stretch reads LIFTIMIVYFLFWAPYNIVLLLNTF. At 261–277 the chain is on the extracellular side; the sequence is QEFFGLNNCSSSNRLDQ. Residues 278–301 traverse the membrane as a helical segment; that stretch reads AMQVTETLGMTHCCINPIIYAFVG. The Cytoplasmic portion of the chain corresponds to 302–352; sequence EKFRNYLLVFFQKHLAKRFCKCCSISQQEAPERASSVYTRSTGEQETTVGL. S-palmitoyl cysteine attachment occurs at residues Cys-321, Cys-323, and Cys-324. 3 positions are modified to phosphoserine; by BARK1: Ser-336, Ser-337, and Ser-342.

It belongs to the G-protein coupled receptor 1 family. In terms of assembly, interacts with PRAF2. Efficient ligand binding to CCL3/MIP-1alpha and CCL4/MIP-1beta requires sulfation, O-glycosylation and sialic acid modifications. Glycosylation on Ser-6 is required for efficient binding of CCL4. Interacts with GRK2. Interacts with ARRB1 and ARRB2. Interacts with CNIH4. Interacts with S100A4; this interaction stimulates T-lymphocyte chemotaxis. Sulfated on at least 2 of the N-terminal tyrosines. Sulfation is required for efficient binding of the chemokines, CCL3 and CCL4. In terms of processing, palmitoylation in the C-terminal is important for cell surface expression. Post-translationally, phosphorylation on serine residues in the C-terminal is stimulated by binding CC chemokines especially by APO-RANTES. O-glycosylated, but not N-glycosylated. Ser-6 appears to be the major site even if Ser-7 may be also O-glycosylated. Also sialylated glycans present which contribute to chemokine binding. Thr-16 and Ser-17 may also be glycosylated and, if so, with small moieties such as a T-antigen.

It is found in the cell membrane. In terms of biological role, receptor for a number of inflammatory CC-chemokines including CCL3/MIP-1-alpha, CCL4/MIP-1-beta and RANTES and subsequently transduces a signal by increasing the intracellular calcium ion level. May play a role in the control of granulocytic lineage proliferation or differentiation. Participates in T-lymphocyte migration to the infection site by acting as a chemotactic receptor. In Allochrocebus solatus (Sun-tailed monkey), this protein is C-C chemokine receptor type 5 (CCR5).